The following is a 275-amino-acid chain: Phosphonoacetaldehyde hydrolase (275 aa).

The active-site Nucleophile is Asp-15. Asp-15 and Ala-17 together coordinate Mg(2+). The active-site Schiff-base intermediate with substrate is Lys-56. Residue Asp-189 coordinates Mg(2+).

The protein belongs to the HAD-like hydrolase superfamily. PhnX family. As to quaternary structure, homodimer. Mg(2+) serves as cofactor.

The enzyme catalyses phosphonoacetaldehyde + H2O = acetaldehyde + phosphate + H(+). Involved in phosphonate degradation. This is Phosphonoacetaldehyde hydrolase from Pseudomonas entomophila (strain L48).